The following is a 485-amino-acid chain: Adenosylhomocysteinase 2 (485 aa).

Residues Thr64, Asp139, and Glu205 each coordinate substrate. Residue 206–208 participates in NAD(+) binding; that stretch reads TTT. Residues Lys235 and Asp239 each coordinate substrate. NAD(+)-binding positions include Asn240, 269-274, Glu292, Asn327, 348-350, and Asn397; these read GYGDVG and IGH.

The protein belongs to the adenosylhomocysteinase family. Requires NAD(+) as cofactor.

It catalyses the reaction S-adenosyl-L-homocysteine + H2O = L-homocysteine + adenosine. It functions in the pathway amino-acid biosynthesis; L-homocysteine biosynthesis; L-homocysteine from S-adenosyl-L-homocysteine: step 1/1. Its function is as follows. Adenosylhomocysteine is a competitive inhibitor of S-adenosyl-L-methionine-dependent methyl transferase reactions; therefore adenosylhomocysteinase may play a key role in the control of methylations via regulation of the intracellular concentration of adenosylhomocysteine. This Arabidopsis thaliana (Mouse-ear cress) protein is Adenosylhomocysteinase 2 (SAHH2).